A 443-amino-acid chain; its full sequence is Phosphoglucosamine mutase (443 aa).

Ser-102 functions as the Phosphoserine intermediate in the catalytic mechanism. Mg(2+) is bound by residues Ser-102, Asp-241, Asp-243, and Asp-245. Ser-102 carries the post-translational modification Phosphoserine.

It belongs to the phosphohexose mutase family. Requires Mg(2+) as cofactor. Activated by phosphorylation.

It carries out the reaction alpha-D-glucosamine 1-phosphate = D-glucosamine 6-phosphate. Catalyzes the conversion of glucosamine-6-phosphate to glucosamine-1-phosphate. The protein is Phosphoglucosamine mutase of Polaromonas sp. (strain JS666 / ATCC BAA-500).